The sequence spans 515 residues: Probable multifunctional siroheme biosynthesis protein HemA (515 aa).

NAD(+) is bound by residues 26–27 (SL) and 47–48 (IR). The interval 26–174 (SLDYKSAAID…TAAKKAKTEI (149 aa)) is glutamyl-tRNA reductase. L-glutamyl-tRNA(Glu) is bound by residues 68-71 (TCNR), Ser-127, Glu-132, and Gln-138. The active-site Nucleophile is Cys-69. An NADP(+)-binding site is contributed by 206–211 (GNGEIG). Residues 367 to 507 (FPLFIDLSGK…SLVKSVAEQI (141 aa)) form a precorrin-2 dehydrogenase /sirohydrochlorin ferrochelatase region.

It in the N-terminal section; belongs to the glutamyl-tRNA reductase family. The protein in the C-terminal section; belongs to the precorrin-2 dehydrogenase / sirohydrochlorin ferrochelatase family. In terms of assembly, homodimer.

It catalyses the reaction (S)-4-amino-5-oxopentanoate + tRNA(Glu) + NADP(+) = L-glutamyl-tRNA(Glu) + NADPH + H(+). The enzyme catalyses precorrin-2 + NAD(+) = sirohydrochlorin + NADH + 2 H(+). It carries out the reaction siroheme + 2 H(+) = sirohydrochlorin + Fe(2+). It functions in the pathway cofactor biosynthesis; adenosylcobalamin biosynthesis; sirohydrochlorin from precorrin-2: step 1/1. It participates in porphyrin-containing compound metabolism; siroheme biosynthesis; siroheme from sirohydrochlorin: step 1/1. Its pathway is porphyrin-containing compound metabolism; siroheme biosynthesis; sirohydrochlorin from precorrin-2: step 1/1. The protein operates within porphyrin-containing compound metabolism; protoporphyrin-IX biosynthesis; 5-aminolevulinate from L-glutamyl-tRNA(Glu): step 1/2. Its function is as follows. Multifunctional enzyme that catalyzes the NADPH-dependent reduction of glutamyl-tRNA(Glu) to glutamate 1-semialdehyde (GSA), the NAD-dependent ring dehydrogenation of precorrin-2 to sirohydrochlorin and finally, the ferrochelation of sirohydrochlorin to yield siroheme. This chain is Probable multifunctional siroheme biosynthesis protein HemA, found in Ruminiclostridium josui (Clostridium josui).